A 449-amino-acid polypeptide reads, in one-letter code: Phosphoglucosamine mutase (449 aa).

Ser-103 (phosphoserine intermediate) is an active-site residue. Mg(2+)-binding residues include Ser-103, Asp-240, Asp-242, and Asp-244. Position 103 is a phosphoserine (Ser-103).

The protein belongs to the phosphohexose mutase family. Mg(2+) serves as cofactor. In terms of processing, activated by phosphorylation.

The catalysed reaction is alpha-D-glucosamine 1-phosphate = D-glucosamine 6-phosphate. Its function is as follows. Catalyzes the conversion of glucosamine-6-phosphate to glucosamine-1-phosphate. This is Phosphoglucosamine mutase from Thermobifida fusca (strain YX).